A 371-amino-acid polypeptide reads, in one-letter code: Glyco-Gag protein (371 aa).

The Cytoplasmic portion of the chain corresponds to 1 to 51 (MSGASSGTAIGAHLFGVSPEYRVLIGDEGAGPSKSLSEVSFSVWYRSRAAR). The helical transmembrane segment at 52-72 (LVILCLVASFLVPCLTFLIAE) threads the bilayer. The Extracellular portion of the chain corresponds to 73-371 (AVMGQTVTTP…NVIDETFPLT (299 aa)). N-linked (GlcNAc...) asparagine; by host glycosylation occurs at asparagine 134. 2 disordered regions span residues 171–281 (VRPF…NNRP) and 350–371 (VPGE…FPLT). A compositionally biased stretch (pro residues) spans 174 to 193 (FLPPPKPPTPLPQPLSPQPS). The span at 194–203 (APLTSSLYPV) shows a compositional bias: low complexity. Pro residues-rich tracts occupy residues 204 to 220 (VPKP…PDPS) and 230 to 245 (EPPP…PSGP).

Post-translationally, glycosylated by host. In terms of processing, cleaved by host near the middle of the molecule, releasing the c-terminal half containing capsid and nucleoprotein domains op GAG.

The protein localises to the host cell membrane. Plays a role in viral particle release. Presumably acts by facilitating the fission of the virion bud at the cell surface. In Feline sarcoma virus (strain Snyder-Theilen), this protein is Glyco-Gag protein.